Reading from the N-terminus, the 41-residue chain is Large ribosomal subunit protein bL36 (41 aa).

Belongs to the bacterial ribosomal protein bL36 family.

This chain is Large ribosomal subunit protein bL36, found in Chelativorans sp. (strain BNC1).